A 317-amino-acid chain; its full sequence is Periplasmic [NiFe] hydrogenase small subunit 1 (317 aa).

A signal peptide (tat-type signal) is located at residues 1–49 (MRFSVGLGKEGAEERLARRGVSRRDFLKFCTAIAVTMGMGPAFAPEVAR). [4Fe-4S] cluster is bound by residues C67, C70, C164, C200, H238, C241, C266, and C272. 3 residues coordinate [3Fe-4S] cluster: C281, C299, and C302.

It belongs to the [NiFe]/[NiFeSe] hydrogenase small subunit family. As to quaternary structure, heterodimer of a large and a small subunit. The cofactor is [3Fe-4S] cluster. Requires [4Fe-4S] cluster as cofactor. Post-translationally, predicted to be exported by the Tat system. The position of the signal peptide cleavage has not been experimentally proven.

Its subcellular location is the periplasm. The enzyme catalyses 2 Fe(III)-[cytochrome c3] + H2 = 2 Fe(II)-[cytochrome c3] + 2 H(+). This Nitratidesulfovibrio vulgaris (strain ATCC 29579 / DSM 644 / CCUG 34227 / NCIMB 8303 / VKM B-1760 / Hildenborough) (Desulfovibrio vulgaris) protein is Periplasmic [NiFe] hydrogenase small subunit 1 (hynB1).